The primary structure comprises 2515 residues: Protein tudor (2515 aa).

A phosphoserine mark is found at serine 226, serine 235, and serine 239. Tudor domains lie at 455–513 and 641–696; these read APEL…LLEI and QLIL…HLEM. Serine 800 is modified (phosphoserine). Residues 840 to 996 are disordered; it reads QAVKSVSGSK…SSSESVAAAK (157 aa). Residues 890–900 show a composition bias toward low complexity; the sequence is STGSYSSGMSS. Polar residues predominate over residues 906 to 917; the sequence is RQQNGRTPIQSP. Residues 918 to 927 show a composition bias toward basic and acidic residues; it reads RHNEKQEAKK. 2 stretches are compositionally biased toward polar residues: residues 943-954 and 964-976; these read GQQGNQRSQNAP and QKST…SSKR. The segment covering 977–995 has biased composition (low complexity); it reads SSGVGSDIASSSSESVAAA. 2 Tudor domains span residues 1062-1122 and 1355-1414; these read QLKV…FADP and KFDV…FYEH. Residues 1515–1589 are disordered; the sequence is EEDKGRKETV…KPATPVPEVV (75 aa). A compositionally biased stretch (basic and acidic residues) spans 1540 to 1553; sequence NDKDREPKKSKPAE. The segment covering 1569–1584 has biased composition (pro residues); it reads SPVPAEPAPVPKPATP. 5 consecutive Tudor domains span residues 1662-1718, 1839-1898, 2023-2082, 2211-2269, and 2392-2451; these read NVVN…SHIE, GFEK…SLPS, KAAV…LIKP, TTNS…PIPS, and DLKE…KPAR.

As to quaternary structure, may form part of a piRNA processing complex consisting of tud, aub and AGO3. Interacts with AGO3 (when symmetrically dimethylated on Arg residues) and aub (when symmetrically dimethylated on Arg residues). Interacts with vls. Interacts with me31B/DDX6 (when symmetrically dimethylated on Arg residues).

It is found in the cytoplasm. The protein localises to the perinuclear region. Its subcellular location is the cytoplasmic ribonucleoprotein granule. Its function is as follows. May act via the Piwi-interacting RNA (piRNA) metabolic process mediated by aub and AGO3 Piwi proteins, which mediates the repression of transposable elements during meiosis by forming complexes composed of piRNAs and Piwi proteins and governs the methylation and subsequent repression of transposons. Required during oogenesis for the formation of primordial germ cells and for normal abdominal segmentation. Not involved in repression of retroelements. The sequence is that of Protein tudor from Drosophila melanogaster (Fruit fly).